The primary structure comprises 365 residues: GTPase Obg (365 aa).

Positions 1-159 (MKFIDEARIE…RMLKLELKVL (159 aa)) constitute an Obg domain. An OBG-type G domain is found at 160 to 334 (ADVGLLGMPN…LVYAIKDHLA (175 aa)). GTP-binding positions include 166 to 173 (GMPNAGKS), 191 to 195 (FTTLH), 213 to 216 (DIPG), 284 to 287 (NKLD), and 315 to 317 (SAL). Positions 173 and 193 each coordinate Mg(2+).

It belongs to the TRAFAC class OBG-HflX-like GTPase superfamily. OBG GTPase family. As to quaternary structure, monomer. Requires Mg(2+) as cofactor.

It localises to the cytoplasm. Its function is as follows. An essential GTPase which binds GTP, GDP and possibly (p)ppGpp with moderate affinity, with high nucleotide exchange rates and a fairly low GTP hydrolysis rate. Plays a role in control of the cell cycle, stress response, ribosome biogenesis and in those bacteria that undergo differentiation, in morphogenesis control. This chain is GTPase Obg, found in Cupriavidus metallidurans (strain ATCC 43123 / DSM 2839 / NBRC 102507 / CH34) (Ralstonia metallidurans).